We begin with the raw amino-acid sequence, 253 residues long: Ditrans,polycis-undecaprenyl-diphosphate synthase ((2E,6E)-farnesyl-diphosphate specific) (253 aa).

D25 is a catalytic residue. Mg(2+) is bound at residue D25. Substrate contacts are provided by residues 26–29 (GNGR), W30, R38, H42, and 70–72 (SSE). N73 (proton acceptor) is an active-site residue. Residues W74, R76, and R193 each contribute to the substrate site. H198 contributes to the Mg(2+) binding site. 199–201 (RIS) lines the substrate pocket. E212 contacts Mg(2+).

Belongs to the UPP synthase family. In terms of assembly, homodimer. It depends on Mg(2+) as a cofactor.

The catalysed reaction is 8 isopentenyl diphosphate + (2E,6E)-farnesyl diphosphate = di-trans,octa-cis-undecaprenyl diphosphate + 8 diphosphate. Functionally, catalyzes the sequential condensation of isopentenyl diphosphate (IPP) with (2E,6E)-farnesyl diphosphate (E,E-FPP) to yield (2Z,6Z,10Z,14Z,18Z,22Z,26Z,30Z,34E,38E)-undecaprenyl diphosphate (di-trans,octa-cis-UPP). UPP is the precursor of glycosyl carrier lipid in the biosynthesis of bacterial cell wall polysaccharide components such as peptidoglycan and lipopolysaccharide. This chain is Ditrans,polycis-undecaprenyl-diphosphate synthase ((2E,6E)-farnesyl-diphosphate specific), found in Pectobacterium atrosepticum (strain SCRI 1043 / ATCC BAA-672) (Erwinia carotovora subsp. atroseptica).